The primary structure comprises 486 residues: Glutamyl-tRNA(Gln) amidotransferase subunit A (486 aa).

Residues Lys-74 and Ser-149 each act as charge relay system in the active site. Ser-173 serves as the catalytic Acyl-ester intermediate.

The protein belongs to the amidase family. GatA subfamily. As to quaternary structure, heterotrimer of A, B and C subunits.

It carries out the reaction L-glutamyl-tRNA(Gln) + L-glutamine + ATP + H2O = L-glutaminyl-tRNA(Gln) + L-glutamate + ADP + phosphate + H(+). In terms of biological role, allows the formation of correctly charged Gln-tRNA(Gln) through the transamidation of misacylated Glu-tRNA(Gln) in organisms which lack glutaminyl-tRNA synthetase. The reaction takes place in the presence of glutamine and ATP through an activated gamma-phospho-Glu-tRNA(Gln). This is Glutamyl-tRNA(Gln) amidotransferase subunit A from Prochlorococcus marinus (strain MIT 9313).